Here is a 179-residue protein sequence, read N- to C-terminus: ATP-dependent protease subunit HslV (179 aa).

The active site involves Thr7. Na(+) is bound by residues Gly162, Cys165, and Thr168.

The protein belongs to the peptidase T1B family. HslV subfamily. In terms of assembly, a double ring-shaped homohexamer of HslV is capped on each side by a ring-shaped HslU homohexamer. The assembly of the HslU/HslV complex is dependent on binding of ATP.

It is found in the cytoplasm. The enzyme catalyses ATP-dependent cleavage of peptide bonds with broad specificity.. Its activity is regulated as follows. Allosterically activated by HslU binding. Its function is as follows. Protease subunit of a proteasome-like degradation complex believed to be a general protein degrading machinery. This Bordetella bronchiseptica (strain ATCC BAA-588 / NCTC 13252 / RB50) (Alcaligenes bronchisepticus) protein is ATP-dependent protease subunit HslV.